The sequence spans 36 residues: Egg-laying hormone (36 aa).

A Lysine amide modification is found at Lys-36.

The protein belongs to the molluscan ELH family. As to expression, bag cell neurons.

The protein resides in the secreted. Functionally, ELH acts as a neurotransmitter locally, upon neurons of the abdominal ganglion and as a hormone by diffusing into the circulating hemolymph and modulating the activity of other organs. It specifically causes contraction of smooth muscle in the ovotestis and expulsion of the egg string. The sequence is that of Egg-laying hormone from Aplysia fasciata (Mottled sea hare).